Reading from the N-terminus, the 251-residue chain is Flagellar basal-body rod protein FlgF (251 aa).

Belongs to the flagella basal body rod proteins family. The basal body constitutes a major portion of the flagellar organelle and consists of five rings (E,L,P,S, and M) mounted on a central rod. The rod consists of about 26 subunits of FlgG in the distal portion, and FlgB, FlgC and FlgF are thought to build up the proximal portion of the rod with about 6 subunits each.

Its subcellular location is the bacterial flagellum basal body. The chain is Flagellar basal-body rod protein FlgF (flgF) from Salmonella typhimurium (strain LT2 / SGSC1412 / ATCC 700720).